A 204-amino-acid polypeptide reads, in one-letter code: Methylthioribulose-1-phosphate dehydratase (204 aa).

Positions 94 and 96 each coordinate Zn(2+).

It belongs to the aldolase class II family. MtnB subfamily. The cofactor is Zn(2+).

It carries out the reaction 5-(methylsulfanyl)-D-ribulose 1-phosphate = 5-methylsulfanyl-2,3-dioxopentyl phosphate + H2O. It participates in amino-acid biosynthesis; L-methionine biosynthesis via salvage pathway; L-methionine from S-methyl-5-thio-alpha-D-ribose 1-phosphate: step 2/6. Catalyzes the dehydration of methylthioribulose-1-phosphate (MTRu-1-P) into 2,3-diketo-5-methylthiopentyl-1-phosphate (DK-MTP-1-P). The polypeptide is Methylthioribulose-1-phosphate dehydratase (Enterobacter sp. (strain 638)).